We begin with the raw amino-acid sequence, 232 residues long: Malate dehydrogenase (232 aa).

Aspartate 4 is an NAD(+) binding site. Positions 51 and 57 each coordinate substrate. Residues asparagine 64 and 87–89 (ITN) each bind NAD(+). Asparagine 89 and arginine 123 together coordinate substrate. Catalysis depends on histidine 147, which acts as the Proton acceptor. Methionine 197 is an NAD(+) binding site.

Belongs to the LDH/MDH superfamily. MDH type 1 family. Homodimer.

The enzyme catalyses (S)-malate + NAD(+) = oxaloacetate + NADH + H(+). Its function is as follows. Catalyzes the reversible oxidation of malate to oxaloacetate. The protein is Malate dehydrogenase (mdh) of Klebsiella variicola.